We begin with the raw amino-acid sequence, 155 residues long: Myosin light chain alkali (155 aa).

2 consecutive EF-hand domains span residues 7–41 (REIE…LNLN) and 80–115 (GCYE…LGES).

In terms of assembly, myosin is a hexamer of 2 heavy chains and 4 light chains.

The protein is Myosin light chain alkali (Mlc1) of Drosophila pseudoobscura pseudoobscura (Fruit fly).